The sequence spans 653 residues: Epithelial sodium channel subunit gamma (653 aa).

Residues 1–55 (MAPGEKIKAKIKKNLPVKGPQAPTIKELMRWYCLNTNTHGCRRIVVSPGRLRRLL) lie on the Cytoplasmic side of the membrane. A helical membrane pass occupies residues 56-76 (WIAFTLTAVGLIFWQCALLVF). Residues 77 to 538 (SFYTVSVSIK…EMLLSNFGGQ (462 aa)) are Extracellular-facing. 8 disulfides stabilise this stretch: C100-C287, C211-C218, C264-C271, C376-C461, C398-C457, C402-C453, C411-C438, and C413-C427. The segment at 137 to 225 (RKQRDTESWS…SDCATYTFSS (89 aa)) is gating release of inhibition by proteolysis (GRIP); protease-sensitive region that is responsible for the proteolytic activation of the channel. An N-linked (GlcNAc...) asparagine glycan is attached at N213. N-linked (GlcNAc...) asparagine glycosylation occurs at N275. Residue N501 is glycosylated (N-linked (GlcNAc...) asparagine). Residues 539–559 (LGLWMSCSVVCVIEIIEVFFI) form a helical membrane-spanning segment. At 560–653 (DSLSIVTRRQ…LADTRLPDEP (94 aa)) the chain is on the cytoplasmic side. The interval 582-632 (AAPSAEAPSGAQGQENPALEIDDDLPTFTSALSLPPAPGAQVPGTPPPRYN) is disordered. A PY motif; recruits WW domain-containing proteins and is thereby required for ubiquitination and inhibition of the channel by NEDD4 and NEDD4L motif is present at residues 627 to 631 (PPPRY).

The protein belongs to the amiloride-sensitive sodium channel (TC 1.A.6) family. SCNN1G subfamily. Component of the heterotrimeric epithelial sodium channel (ENaC) composed of an alpha/SCNN1A, a beta/SCNN1B and a gamma/SCNN1G subunit. Interacts with WWP1 (via WW domains). Interacts with WWP2 (via WW domains); inhibits the channel. Interacts with the full-length immature form of PCSK9 (pro-PCSK9); inhibits ENaC by promoting its proteasomal degradation. Interacts with BPIFA1; the interaction is indirect via SCNN1B and inhibits the proteolytic maturation of SCNN1A and SCNN1G and the activation of ENaC. Phosphorylated on serine and threonine residues. Aldosterone and insulin increase the basal level of phosphorylation. Post-translationally, ubiquitinated. Can be ubiquitinated at multiple sites and undergo monoubiquitination and polyubiquitination. Ubiquitination by NEDD4 or NEDD4L inhibits the ENaC channel through endocytosis, intracellular retention and degradation of its individual subunits. In terms of processing, ENaC is activated through the proteolytic maturation of its subunits. Furin cleaves the SCNN1G subunit first, followed by cleavage by prostasin (PRSS8), which results in a stepwise increase in the open probability of the channel due to the release of an inhibitory tract. BPIFA1, which is recruited by the SCNN1B subunit, prevents the proteolytic activation of ENaC. N-glycosylated. N-linked glycans are processed to complex type during ENaC complex assembly and transport to the plasma membrane.

It is found in the apical cell membrane. It catalyses the reaction Na(+)(in) = Na(+)(out). Its activity is regulated as follows. Originally identified and characterized by its inhibition by the diuretic drug amiloride. In terms of biological role, this is one of the three pore-forming subunits of the heterotrimeric epithelial sodium channel (ENaC), a critical regulator of sodium balance and fluid homeostasis. ENaC operates in epithelial tissues, where it mediates the electrodiffusion of sodium ions from extracellular fluid through the apical membrane of cells, with water following osmotically. It plays a key role in maintaining sodium homeostasis through electrogenic sodium reabsorption in the kidneys. Additionally, ENaC is essential for airway surface liquid homeostasis, which is crucial for proper mucus clearance. The sequence is that of Epithelial sodium channel subunit gamma from Oryctolagus cuniculus (Rabbit).